A 169-amino-acid chain; its full sequence is Ribosome maturation factor RimM (169 aa).

The PRC barrel domain occupies 96–169 (DGEYYWADLI…RILVDWGLDY (74 aa)).

It belongs to the RimM family. As to quaternary structure, binds ribosomal protein uS19.

It localises to the cytoplasm. Functionally, an accessory protein needed during the final step in the assembly of 30S ribosomal subunit, possibly for assembly of the head region. Essential for efficient processing of 16S rRNA. May be needed both before and after RbfA during the maturation of 16S rRNA. It has affinity for free ribosomal 30S subunits but not for 70S ribosomes. This is Ribosome maturation factor RimM from Chromobacterium violaceum (strain ATCC 12472 / DSM 30191 / JCM 1249 / CCUG 213 / NBRC 12614 / NCIMB 9131 / NCTC 9757 / MK).